Consider the following 388-residue polypeptide: G2/mitotic-specific cyclin-B2 (388 aa).

Residues 46–67 (ATNGKVGPSKKPSKASCVQKPK) are disordered.

The protein belongs to the cyclin family. Cyclin AB subfamily. Interacts with the CDK1 protein kinase to form a serine/threonine kinase holoenzyme complex also known as maturation promoting factor (MPF). The cyclin subunit imparts substrate specificity to the complex.

In terms of biological role, essential for the control of the cell cycle at the G2/M (mitosis) transition. This Oryzias curvinotus (Hynann ricefish) protein is G2/mitotic-specific cyclin-B2 (ccnb2).